The primary structure comprises 571 residues: Potassium-transporting ATPase potassium-binding subunit (571 aa).

The next 12 membrane-spanning stretches (helical) occupy residues 5-25 (GWMQ…PLGG), 64-84 (LAYA…LYAL), 136-156 (GLTH…VALI), 179-199 (LYVL…QGMP), 220-240 (VGPV…GGFF), 254-274 (LSNF…TNVF), 285-305 (WAIL…TYWA), 330-350 (FGIA…CGAV), 375-395 (IIGG…VAIF), 421-441 (MLGI…ATVV), 488-508 (LAIG…AIAG), and 527-547 (GGLF…LTFF).

This sequence belongs to the KdpA family. In terms of assembly, the system is composed of three essential subunits: KdpA, KdpB and KdpC.

It localises to the cell inner membrane. Its function is as follows. Part of the high-affinity ATP-driven potassium transport (or Kdp) system, which catalyzes the hydrolysis of ATP coupled with the electrogenic transport of potassium into the cytoplasm. This subunit binds the periplasmic potassium ions and delivers the ions to the membrane domain of KdpB through an intramembrane tunnel. The chain is Potassium-transporting ATPase potassium-binding subunit from Methylorubrum extorquens (strain CM4 / NCIMB 13688) (Methylobacterium extorquens).